We begin with the raw amino-acid sequence, 130 residues long: Small ribosomal subunit protein uS11c (130 aa).

The protein belongs to the universal ribosomal protein uS11 family. As to quaternary structure, part of the 30S ribosomal subunit.

It is found in the plastid. The protein resides in the chloroplast. The protein is Small ribosomal subunit protein uS11c of Tupiella akineta (Green alga).